A 75-amino-acid polypeptide reads, in one-letter code: MKLLLFTALVLVVISLIEVEAENERACIPLEKECTKTPGNCCSGLKCDCYRRFEQGVAKGIQCWCIGKDVTYKGV.

Residues 1-21 (MKLLLFTALVLVVISLIEVEA) form the signal peptide. The propeptide occupies 22–25 (ENER).

It belongs to the neurotoxin 19 (CSTX) family. 06 (U6-Lctx) subfamily. Post-translationally, contains 4 disulfide bonds. Expressed by the venom gland.

The protein resides in the secreted. This Lycosa singoriensis (Wolf spider) protein is U6-lycotoxin-Ls1h.